Reading from the N-terminus, the 209-residue chain is Ribosomal RNA large subunit methyltransferase E (209 aa).

S-adenosyl-L-methionine contacts are provided by G63, W65, D83, D99, and D124. Catalysis depends on K164, which acts as the Proton acceptor.

It belongs to the class I-like SAM-binding methyltransferase superfamily. RNA methyltransferase RlmE family.

The protein localises to the cytoplasm. It carries out the reaction uridine(2552) in 23S rRNA + S-adenosyl-L-methionine = 2'-O-methyluridine(2552) in 23S rRNA + S-adenosyl-L-homocysteine + H(+). Its function is as follows. Specifically methylates the uridine in position 2552 of 23S rRNA at the 2'-O position of the ribose in the fully assembled 50S ribosomal subunit. This Shewanella sp. (strain MR-7) protein is Ribosomal RNA large subunit methyltransferase E.